The sequence spans 330 residues: Aspartate--ammonia ligase (330 aa).

It belongs to the class-II aminoacyl-tRNA synthetase family. AsnA subfamily.

The protein resides in the cytoplasm. The enzyme catalyses L-aspartate + NH4(+) + ATP = L-asparagine + AMP + diphosphate + H(+). It functions in the pathway amino-acid biosynthesis; L-asparagine biosynthesis; L-asparagine from L-aspartate (ammonia route): step 1/1. This is Aspartate--ammonia ligase from Haemophilus influenzae (strain 86-028NP).